We begin with the raw amino-acid sequence, 688 residues long: T-box transcription factor TBX2-A (688 aa).

The T-box DNA-binding region spans 104–277 (LWDQFHKIGT…NNPFAKGFRD (174 aa)). 2 disordered regions span residues 301–436 (CKAD…GSLS) and 606–688 (PSTN…ETPK). Composition is skewed to basic and acidic residues over residues 340–361 (NNRE…EIRS), 378–403 (RLED…KDGS), and 412–430 (SLEK…KSDP). Residues 621–636 (PGSESSKPGSSRESSP) show a composition bias toward low complexity. A coiled-coil region spans residues 655 to 679 (ASMKDSINELQNIQRLVSGLESQRE). The segment covering 676-688 (SQREISPGRETPK) has biased composition (basic and acidic residues).

Binds DNA as a monomer.

The protein resides in the nucleus. Its function is as follows. Transcription factor which acts as a transcriptional repressor. May also function as a transcriptional activator. Binds to the palindromic T site 5'-TTCACACCTAGGTGTGAA-3' DNA sequence, or a half-site, which are present in the regulatory region of several genes. This Xenopus laevis (African clawed frog) protein is T-box transcription factor TBX2-A (tbx2-a).